Here is a 156-residue protein sequence, read N- to C-terminus: ATP synthase subunit b (156 aa).

A helical membrane pass occupies residues 5 to 25; that stretch reads LTLIVQMLVFAAFVLFTMKLV.

The protein belongs to the ATPase B chain family. In terms of assembly, F-type ATPases have 2 components, F(1) - the catalytic core - and F(0) - the membrane proton channel. F(1) has five subunits: alpha(3), beta(3), gamma(1), delta(1), epsilon(1). F(0) has three main subunits: a(1), b(2) and c(10-14). The alpha and beta chains form an alternating ring which encloses part of the gamma chain. F(1) is attached to F(0) by a central stalk formed by the gamma and epsilon chains, while a peripheral stalk is formed by the delta and b chains.

The protein localises to the cell inner membrane. In terms of biological role, f(1)F(0) ATP synthase produces ATP from ADP in the presence of a proton or sodium gradient. F-type ATPases consist of two structural domains, F(1) containing the extramembraneous catalytic core and F(0) containing the membrane proton channel, linked together by a central stalk and a peripheral stalk. During catalysis, ATP synthesis in the catalytic domain of F(1) is coupled via a rotary mechanism of the central stalk subunits to proton translocation. Functionally, component of the F(0) channel, it forms part of the peripheral stalk, linking F(1) to F(0). The polypeptide is ATP synthase subunit b (Legionella pneumophila (strain Paris)).